Reading from the N-terminus, the 152-residue chain is Deoxyuridine 5'-triphosphate nucleotidohydrolase (152 aa).

Residues 71 to 73 (RSG), Asn-84, 88 to 90 (LID), and Met-98 each bind substrate.

Belongs to the dUTPase family. It depends on Mg(2+) as a cofactor.

The enzyme catalyses dUTP + H2O = dUMP + diphosphate + H(+). It participates in pyrimidine metabolism; dUMP biosynthesis; dUMP from dCTP (dUTP route): step 2/2. This enzyme is involved in nucleotide metabolism: it produces dUMP, the immediate precursor of thymidine nucleotides and it decreases the intracellular concentration of dUTP so that uracil cannot be incorporated into DNA. This Shewanella sediminis (strain HAW-EB3) protein is Deoxyuridine 5'-triphosphate nucleotidohydrolase.